A 325-amino-acid chain; its full sequence is Ribosomal RNA small subunit methyltransferase C (325 aa).

It belongs to the methyltransferase superfamily. RsmC family. As to quaternary structure, monomer.

The protein localises to the cytoplasm. The enzyme catalyses guanosine(1207) in 16S rRNA + S-adenosyl-L-methionine = N(2)-methylguanosine(1207) in 16S rRNA + S-adenosyl-L-homocysteine + H(+). Functionally, specifically methylates the guanine in position 1207 of 16S rRNA in the 30S particle. The protein is Ribosomal RNA small subunit methyltransferase C of Alcanivorax borkumensis (strain ATCC 700651 / DSM 11573 / NCIMB 13689 / SK2).